A 3032-amino-acid polypeptide reads, in one-letter code: DmX-like protein 2 (3032 aa).

WD repeat units lie at residues 108 to 145, 167 to 207, and 230 to 278; these read FLSSVTYNLAWDPQDNRLLTATDSIQLWAPPGGDILEE, KTSV…KSSI, and AHPR…EDCL. The residue at position 326 (Ser326) is a Phosphoserine. Positions 418–486 are disordered; the sequence is QLDHESDDAD…HPRPSISMPL (69 aa). Positions 422–434 are enriched in acidic residues; that stretch reads ESDDADREDEERS. Over residues 435-474 the composition is skewed to basic and acidic residues; sequence QDERERGLRMKLDHELSLDRESEAGTGSSEHEDGEREGSP. The residue at position 473 (Ser473) is a Phosphoserine. The stretch at 492-532 is one WD 4 repeat; the sequence is DRKIETLLTEWNKNPDMLFTIHPVDGTFLVWHVKYLDEYNP. Positions 577-598 are disordered; that stretch reads PSQQEMMSVDSPHGSQLHSPSH. Ser587 is modified (phosphoserine). Positions 589-598 are enriched in polar residues; that stretch reads HGSQLHSPSH. WD repeat units lie at residues 594 to 633, 750 to 802, and 879 to 921; these read HSPSHSTDMNILAPTVMMVSKHIDGSLNQWAVTFADKSAF, LHTS…RKLL, and QPSQ…VQAC. The interval 937-958 is disordered; the sequence is VPGQKNLDSSPETSSSMSSVPH. Phosphoserine occurs at positions 945 and 946. Residues 945-958 are compositionally biased toward low complexity; that stretch reads SSPETSSSMSSVPH. The stretch at 1001–1038 is one WD 8 repeat; it reads LSSSSIYPVCLAPYLVVTTCSDNKVRFWKCCMETNSLG. Phosphoserine occurs at positions 1141, 1144, and 1152. WD repeat units lie at residues 1164–1205 and 1245–1285; these read PNIK…VSDQ and GTPS…GNVD. Ser1288 and Ser1399 each carry phosphoserine. Residue Thr1416 is modified to Phosphothreonine. Residues 1443-1464 form a disordered region; that stretch reads RISEDSTKKPQSYEDHIESQSE. Residues 1444-1461 are compositionally biased toward basic and acidic residues; it reads ISEDSTKKPQSYEDHIES. Ser1856 is modified (phosphoserine). The disordered stretch occupies residues 1922–1953; the sequence is QLDSVSGRMENGPSESKPVSRSDGGSGADWSA. Phosphothreonine is present on Thr2017. Residues 2117–2146 adopt a coiled-coil conformation; that stretch reads GSYERHQIERRRLQAKREHAERRKLWLQKN. Ser2394 and Ser2636 each carry phosphoserine. The span at 2722 to 2732 shows a compositional bias: low complexity; sequence QPGAASHSSSQ. The disordered stretch occupies residues 2722–2744; it reads QPGAASHSSSQPHPPPSLPWLGS. 6 WD repeats span residues 2757–2796, 2800–2839, 2846–2888, 2894–2933, 2936–2975, and 2988–3026; these read RNLHNVKRMTSHPVHQYYLTGAQDGSVRMFEWTRPQQLVC, AGNARVTRLYFNSQGNKCGVADGEGFLSIWQVNQTASNPK, CHSK…GNSL, CHDHGATVLQYAPKQQLLISGGRKGYICIFDIRQRQLIHT, AHDSAIKALALDSCEEYFTTGSAEGNIKVWRLTGHGLIHS, and NIGAGVMQIAISQDNRLFSCGADGTLKTRVLPSAFNIPN.

In terms of assembly, interacts with MADD and RAB3GAP. Expressed in the brain and pituitary gland. Detected in the hippocampus, dentate gyrus, hypothalamus, pyriform cortex and the granular and molecular layers of the cerebellum of adult animals. In the hypothalamus, expression is observed in the arcuate nucleus, the ME, the organum vasculosum of the lamina terminalis, and the subfornical organ, the subcommissural organ, and the suprachiasmatic nucleus. Both tanycytes and hypothalamic neurosecretory neurons express the protein. Expressed in the inner and outer hair cells as well as in the spiral ganglion neurons. Expressed in insulin-secreting cells of the islets of Langerhans in the pancreas.

The protein resides in the cytoplasmic vesicle. Its subcellular location is the secretory vesicle. It localises to the synaptic vesicle membrane. It is found in the neuronal dense core vesicle. Its function is as follows. May serve as a scaffold protein for MADD and RAB3GA on synaptic vesicles of neuronal and endocrine homeostatic processes. Plays a role in the brain as a key controller of neuronal and endocrine homeostatic processes. The polypeptide is DmX-like protein 2 (Dmxl2) (Mus musculus (Mouse)).